The sequence spans 442 residues: Transcription factor MYCFIDRAFT_198930 (442 aa).

The segment at 1–34 is disordered; sequence MSTTPMAAPPGADLKPVTSSRGRSSTSDEQKLRS. The segment at residues 36 to 63 is a DNA-binding region (zn(2)-C6 fungal-type); sequence CESCAQSKLKCSGDKPACARCAKRGLAC. Residues 74–107 form a disordered region; that stretch reads KPKGYTSTNDNNPSKRREDSHSPAASQWSSTGHL. A compositionally biased stretch (polar residues) spans 96–107; sequence PAASQWSSTGHL.

The protein localises to the nucleus. Functionally, transcription factor that positively regulates the expression of the gene cluster that mediates the biosynthesis of an emodin derivative that may be involved in black Sigatoka disease of banana. This chain is Transcription factor MYCFIDRAFT_198930, found in Pseudocercospora fijiensis (strain CIRAD86) (Black leaf streak disease fungus).